We begin with the raw amino-acid sequence, 558 residues long: MSKLFRRVVTVLALTSMASSFASGKIEAAAAESLATRFIASAENSDDNISQRKAKKVRFGRNKYQKQEQKNNGPYCDKEFYPCQDGSCQSSVDTKQEPCYGKMYCVRVSDDSNVEISQAVPEYATVGSPYPIEILAVGKRDCVNVVITQQLPCEVEFISSDPATTPTSDSKLIWTIDRLGQGERCKITVWVKPLKEGCCFTAATVCACPELRSYTKCGQPAICIKQEGPECACLRCPVCYKIEVTNTGSAIARGVVVDNPVPDGYSHPSGQRVLSFNLGDMRPGDTKCFTVEFCPQKRGKITNVATVSYCGGHKCSANVTTVINEPCVQVNISGNDWSYVCKPVEYTIVVSNPGDLKLYDVVIEDLIPSGITILEAPGAEICCNKAVWCIKEMCPGETLQFKVVAKAQTPGKFTNQVSVKTNSDCGSCTSCAEVTTHWKGLAATHMCVIDTNDPICVGENTVYRICVTNRGSAEDTNVSLILKFSKELQPVSSSGPTKGTITGNTVVFDALPKLGSKESVEFSVTLKGVAPGDARGEAILSSDTLTVPVADTENTHVY.

Positions 1–22 are cleaved as a signal peptide; sequence MSKLFRRVVTVLALTSMASSFA. Positions 23–40 are excised as a propeptide; it reads SGKIEAAAAESLATRFIA.

Part of a disulfide cross-linked outer membrane complex (COMC) composed of the major outer membrane porin (MOMP), the small cysteine-rich protein (OmcA) and the large cysteine-rich periplasmic protein (OmcB).

Its subcellular location is the periplasm. Its function is as follows. In elementary bodies (EBs, the infectious stage, which is able to survive outside the host cell) provides the structural integrity of the outer envelope through disulfide cross-links with the small cysteine-rich protein and the major outer membrane porin. It has been described in publications as the Sarkosyl-insoluble COMC (Chlamydia outer membrane complex), and serves as the functional equivalent of peptidoglycan. It is present but the disulfide bonds are reduced in reticulate bodies (RBs). In Chlamydia caviae (strain ATCC VR-813 / DSM 19441 / 03DC25 / GPIC) (Chlamydophila caviae), this protein is Large cysteine-rich periplasmic protein OmcB (omcB).